A 484-amino-acid polypeptide reads, in one-letter code: Acetyl-coenzyme A carboxylase carboxyl transferase subunit beta, chloroplastic (484 aa).

The 262-residue stretch at 223-484 (LWIQCDNCYG…LHAFFPLNKN (262 aa)) folds into the CoA carboxyltransferase N-terminal domain. Residues Cys227, Cys230, Cys243, and Cys246 each coordinate Zn(2+). The C4-type zinc finger occupies 227 to 246 (CDNCYGLMYKKVKINVCEQC).

Belongs to the AccD/PCCB family. In terms of assembly, acetyl-CoA carboxylase is a heterohexamer composed of biotin carboxyl carrier protein, biotin carboxylase and 2 subunits each of ACCase subunit alpha and ACCase plastid-coded subunit beta (accD). Requires Zn(2+) as cofactor.

The protein localises to the plastid. Its subcellular location is the chloroplast stroma. The catalysed reaction is N(6)-carboxybiotinyl-L-lysyl-[protein] + acetyl-CoA = N(6)-biotinyl-L-lysyl-[protein] + malonyl-CoA. Its pathway is lipid metabolism; malonyl-CoA biosynthesis; malonyl-CoA from acetyl-CoA: step 1/1. Component of the acetyl coenzyme A carboxylase (ACC) complex. Biotin carboxylase (BC) catalyzes the carboxylation of biotin on its carrier protein (BCCP) and then the CO(2) group is transferred by the transcarboxylase to acetyl-CoA to form malonyl-CoA. This chain is Acetyl-coenzyme A carboxylase carboxyl transferase subunit beta, chloroplastic, found in Capsella bursa-pastoris (Shepherd's purse).